The chain runs to 96 residues: Conantokin Rl-C (96 aa).

The first 21 residues, 1–21 (MQLYTYLYLLVPLVTFHLILG), serve as a signal peptide directing secretion. The propeptide occupies 22–78 (TGTLDHGDALTERRSADATALKPEPVLLQKSSARSTDDNGKDTQMKRIFKKRRNKAR). The segment at 36–85 (SADATALKPEPVLLQKSSARSTDDNGKDTQMKRIFKKRRNKARGEEELSE) is disordered. Positions 56–66 (STDDNGKDTQM) are enriched in basic and acidic residues. Glutamate 81 provides a ligand contact to a divalent metal cation. Residues glutamate 81, glutamate 82, glutamate 85, glutamate 89, and glutamate 93 each carry the 4-carboxyglutamate modification. Positions 85, 89, and 93 each coordinate a divalent metal cation. Asparagine 96 is subject to Asparagine amide.

It belongs to the conotoxin B superfamily. The cofactor is Ca(2+). Requires Mg(2+) as cofactor. As to expression, expressed by the venom duct.

It localises to the secreted. Functionally, conantokins inhibit N-methyl-D-aspartate (NMDA) receptors. This toxin has antagonist activity on NR2B/GRIN2B (IC(50)=1.4 uM) and NR2A/GRIN2A (IC(50)=2.9 uM) subunits, when tested on rat receptors. The protein is Conantokin Rl-C of Conus rolani (Cone snail).